Reading from the N-terminus, the 452-residue chain is uncharacterized protein (452 aa).

Belongs to the HypE family.

This is an uncharacterized protein from Methanocaldococcus jannaschii (strain ATCC 43067 / DSM 2661 / JAL-1 / JCM 10045 / NBRC 100440) (Methanococcus jannaschii).